Consider the following 338-residue polypeptide: Anthranilate phosphoribosyltransferase (338 aa).

5-phospho-alpha-D-ribose 1-diphosphate contacts are provided by residues Gly81, 84–85 (GD), Thr89, 91–94 (NIST), 109–117 (KHGNRALSS), and Ala121. Residue Gly81 participates in anthranilate binding. Mg(2+) is bound at residue Ser93. Asn112 lines the anthranilate pocket. Arg167 lines the anthranilate pocket. 2 residues coordinate Mg(2+): Asp225 and Glu226.

It belongs to the anthranilate phosphoribosyltransferase family. In terms of assembly, homodimer. Mg(2+) is required as a cofactor.

It carries out the reaction N-(5-phospho-beta-D-ribosyl)anthranilate + diphosphate = 5-phospho-alpha-D-ribose 1-diphosphate + anthranilate. It functions in the pathway amino-acid biosynthesis; L-tryptophan biosynthesis; L-tryptophan from chorismate: step 2/5. Its function is as follows. Catalyzes the transfer of the phosphoribosyl group of 5-phosphorylribose-1-pyrophosphate (PRPP) to anthranilate to yield N-(5'-phosphoribosyl)-anthranilate (PRA). The polypeptide is Anthranilate phosphoribosyltransferase (Rhizobium etli (strain CIAT 652)).